The primary structure comprises 429 residues: L-dopachrome tautomerase yellow-f (429 aa).

A signal peptide spans 1–23 (MLSLDVLLLCAISGFQLLISADG). N-linked (GlcNAc...) asparagine glycans are attached at residues Asn-133 and Asn-372.

The protein belongs to the major royal jelly protein family.

The protein resides in the secreted. It carries out the reaction L-dopachrome = 5,6-dihydroxyindole-2-carboxylate. It functions in the pathway pigment biosynthesis; melanin biosynthesis. Tautomerization of L-dopachrome with decarboxylation to give 5,6-dihydroxyindole (DHI). Also catalyzes the tautomerization of the methyl ester of L-dopachrome and dopamine chrome. May play a role in melanization reactions during late pupal and adult stages. May play a role in melanization reactions during larval and early pupal stages. The protein is L-dopachrome tautomerase yellow-f of Drosophila melanogaster (Fruit fly).